Consider the following 96-residue polypeptide: Myticin-B (96 aa).

The signal sequence occupies residues 1-20 (MKATMLLAVVVAVFVAGTEA). Positions 61–96 (VKFPFGATQDAKSMNELEYTPIMKSMENLDNGMDML) are cleaved as a propeptide — removed in mature form.

Post-translationally, contains four disulfide bonds. In terms of tissue distribution, hemocytes.

Its subcellular location is the secreted. Its function is as follows. Bacteriolytic activity against Gram-positive bacteria M.luteus, B.megaterium and A.viridans and Gram-negative bacteria E.coli D31. Possesses antifungal activity against F.oxysporum. This Mytilus galloprovincialis (Mediterranean mussel) protein is Myticin-B.